Here is a 362-residue protein sequence, read N- to C-terminus: 3-dehydroquinate synthase (362 aa).

Belongs to the archaeal-type DHQ synthase family.

The catalysed reaction is 2-amino-2,3,7-trideoxy-D-lyxo-hept-6-ulosonate + NAD(+) + H2O = 3-dehydroquinate + NH4(+) + NADH + H(+). In terms of biological role, catalyzes the oxidative deamination and cyclization of 2-amino-3,7-dideoxy-D-threo-hept-6-ulosonic acid (ADH) to yield 3-dehydroquinate (DHQ), which is fed into the canonical shikimic pathway of aromatic amino acid biosynthesis. This Methanothrix thermoacetophila (strain DSM 6194 / JCM 14653 / NBRC 101360 / PT) (Methanosaeta thermophila) protein is 3-dehydroquinate synthase.